A 376-amino-acid chain; its full sequence is MAIKVLVVDDSSFFRRRVSEIINAESRLEVIDVAVNGKEAVEKAKRLKPDVITMDIEMPVMDGISAVREIMASVPTPILMFSSLTHDGAKATLDALDAGALDFLPKKFEDIARNRDEAVSLLQQRVIQIASKRAFMRRPVASSTPVQERPQSTLNRPTTGLRREAPAQAPVSRAPVAAKFRASGKKYQLTAIGTSTGGPVALQKILTKLPANYPHPIVLIQHMPATFTAAFASRLNSLCKIQVKEAEDGDVLQAGVAYLAPGGKQMMIDGRPGAARLRIIDGGERMNYKPCVDVTFGSAAKIYADKVLSMVLTGMGADGREGARMLKSAGATIWAQDEDSCVVYGMPQAVAKAGLSTEDLPLERIAERMLVEVGLA.

Residues 4–121 (KVLVVDDSSF…ARNRDEAVSL (118 aa)) enclose the Response regulatory domain. The residue at position 55 (Asp-55) is a 4-aspartylphosphate. Residues 138–174 (RPVASSTPVQERPQSTLNRPTTGLRREAPAQAPVSRA) form a disordered region. Positions 141–158 (ASSTPVQERPQSTLNRPT) are enriched in polar residues. Positions 183–376 (SGKKYQLTAI…ERMLVEVGLA (194 aa)) constitute a CheB-type methylesterase domain. Active-site residues include Ser-195, His-222, and Asp-318.

Belongs to the CheB family. In terms of processing, phosphorylated by CheA. Phosphorylation of the N-terminal regulatory domain activates the methylesterase activity.

It is found in the cytoplasm. The catalysed reaction is [protein]-L-glutamate 5-O-methyl ester + H2O = L-glutamyl-[protein] + methanol + H(+). It carries out the reaction L-glutaminyl-[protein] + H2O = L-glutamyl-[protein] + NH4(+). Involved in chemotaxis. Part of a chemotaxis signal transduction system that modulates chemotaxis in response to various stimuli. Catalyzes the demethylation of specific methylglutamate residues introduced into the chemoreceptors (methyl-accepting chemotaxis proteins or MCP) by CheR. Also mediates the irreversible deamidation of specific glutamine residues to glutamic acid. The sequence is that of Protein-glutamate methylesterase/protein-glutamine glutaminase 1 from Vibrio vulnificus (strain CMCP6).